The following is a 147-amino-acid chain: Phosphoribosyl-AMP cyclohydrolase (147 aa).

Asp-91 provides a ligand contact to Mg(2+). Position 92 (Cys-92) interacts with Zn(2+). Mg(2+) contacts are provided by Asp-93 and Asp-95. Zn(2+) is bound by residues Cys-109 and Cys-116.

Belongs to the PRA-CH family. Homodimer. It depends on Mg(2+) as a cofactor. The cofactor is Zn(2+).

It localises to the cytoplasm. The enzyme catalyses 1-(5-phospho-beta-D-ribosyl)-5'-AMP + H2O = 1-(5-phospho-beta-D-ribosyl)-5-[(5-phospho-beta-D-ribosylamino)methylideneamino]imidazole-4-carboxamide. The protein operates within amino-acid biosynthesis; L-histidine biosynthesis; L-histidine from 5-phospho-alpha-D-ribose 1-diphosphate: step 3/9. Its function is as follows. Catalyzes the hydrolysis of the adenine ring of phosphoribosyl-AMP. This is Phosphoribosyl-AMP cyclohydrolase from Rhodopseudomonas palustris (strain BisB18).